The primary structure comprises 415 residues: Gamma-glutamyl phosphate reductase (415 aa).

Belongs to the gamma-glutamyl phosphate reductase family.

It localises to the cytoplasm. The catalysed reaction is L-glutamate 5-semialdehyde + phosphate + NADP(+) = L-glutamyl 5-phosphate + NADPH + H(+). It functions in the pathway amino-acid biosynthesis; L-proline biosynthesis; L-glutamate 5-semialdehyde from L-glutamate: step 2/2. Functionally, catalyzes the NADPH-dependent reduction of L-glutamate 5-phosphate into L-glutamate 5-semialdehyde and phosphate. The product spontaneously undergoes cyclization to form 1-pyrroline-5-carboxylate. The chain is Gamma-glutamyl phosphate reductase from Leuconostoc citreum (strain KM20).